The sequence spans 394 residues: MASPLLPGPPDQRRNLDWCWSKLPSDLMQFVFDRLGFADFQRAKSVCSSWLSVSRNSQPNNQIPWMIRFPKDNNHCLLFNPEEEDKMYKTPNLGNDFAKSSCIASYGSWLLMQPESEYMEEDLDHQCNNLYILDLLTRERINLPILQPEFGLTCPILWTDEKSKDHLVIGMAHEELAISFKKGDSSWKQIPTLSGIEECFSMVFKDHKLYCLSNYKLKVFDFSGDIPVKVFKTSVSKLLNNPLCISMRMRLPGIPMKDQLNHFKDDMVVTLAGHVLIVKCHRPSLSKIWSFEIYKMEGNNNKWEKTVSLGDETILLDLGITVLAKDMQGIKANSIYFSNPTPYFKDQYDENEIFIFDLDSNTVEQPHRSVSSSFPRSRARWFLPCFKRESYFLQ.

Residues 17-63 (DWCWSKLPSDLMQFVFDRLGFADFQRAKSVCSSWLSVSRNSQPNNQI) enclose the F-box domain.

In Arabidopsis thaliana (Mouse-ear cress), this protein is Putative F-box protein At5g66830.